We begin with the raw amino-acid sequence, 610 residues long: Synaptotagmin-like protein 3 (610 aa).

Residues 4-123 form the RabBD domain; it reads EIDLSALKEL…IKTGEWFYEE (120 aa). A disordered region spans residues 219–239; it reads RQCVGQTERRSQSDTAVNVTT. C2 domains follow at residues 306-428 and 462-603; these read VTGE…TQSF and RPRK…NLWT.

In terms of assembly, monomer. Binds NRXN1. Binds RAB27A that has been activated by GTP-binding via its N-terminus.

Its subcellular location is the endomembrane system. In terms of biological role, may act as Rab effector protein and play a role in vesicle trafficking. Binds phospholipids in the presence of calcium ions. The chain is Synaptotagmin-like protein 3 (SYTL3) from Homo sapiens (Human).